Reading from the N-terminus, the 131-residue chain is RutC family protein YjgH (131 aa).

This sequence belongs to the RutC family.

The sequence is that of RutC family protein YjgH (yjgH) from Escherichia coli (strain K12).